A 353-amino-acid polypeptide reads, in one-letter code: Casein kinase II subunit alpha (353 aa).

Residues 39–324 (YQLVRKLGRG…AREAMDHPYF (286 aa)) form the Protein kinase domain. Residues 45–53 (LGRGKYSEV) and Lys68 each bind ATP. Catalysis depends on Asp156, which acts as the Proton acceptor. Residues 334 to 353 (MVSSNSPTPNALQGPISTTE) are disordered.

This sequence belongs to the protein kinase superfamily. Ser/Thr protein kinase family. CK2 subfamily. As to quaternary structure, tetramer of two alpha and two beta chains.

It catalyses the reaction L-seryl-[protein] + ATP = O-phospho-L-seryl-[protein] + ADP + H(+). The catalysed reaction is L-threonyl-[protein] + ATP = O-phospho-L-threonyl-[protein] + ADP + H(+). Functionally, casein kinases are operationally defined by their preferential utilization of acidic proteins such as caseins as substrates. The alpha chain contains the catalytic site. May participate in Wnt signaling. The chain is Casein kinase II subunit alpha from Spodoptera frugiperda (Fall armyworm).